Consider the following 84-residue polypeptide: Small ribosomal subunit protein uS17 (84 aa).

It belongs to the universal ribosomal protein uS17 family. As to quaternary structure, part of the 30S ribosomal subunit.

Its function is as follows. One of the primary rRNA binding proteins, it binds specifically to the 5'-end of 16S ribosomal RNA. The chain is Small ribosomal subunit protein uS17 from Erwinia tasmaniensis (strain DSM 17950 / CFBP 7177 / CIP 109463 / NCPPB 4357 / Et1/99).